The chain runs to 83 residues: Antitoxin ParD1 (83 aa).

Residues 33–60 (IRSALRLLEDRETQLRALREALEAGERS) are a coiled coil. The segment at 54 to 83 (LEAGERSGSSTPFDFDGFLGRKRADASRGR) is disordered.

The protein belongs to the ParD antitoxin family.

In terms of biological role, antitoxin component of a type II toxin-antitoxin (TA) system. This Mycobacterium tuberculosis (strain CDC 1551 / Oshkosh) protein is Antitoxin ParD1 (parD1).